A 923-amino-acid chain; its full sequence is Protocadherin gamma-B4 (923 aa).

Positions M1–C30 are cleaved as a signal peptide. Cadherin domains are found at residues E31–F133, T134–F242, S243–V345, I346–F450, S451–V560, and D568–I673. The Extracellular portion of the chain corresponds to E31–Y689. Residues N417 and N543 are each glycosylated (N-linked (GlcNAc...) asparagine). A helical membrane pass occupies residues L690–A710. Residues L711–K923 are Cytoplasmic-facing. Disordered stretches follow at residues S797 to N832 and A893 to K923. A compositionally biased stretch (basic residues) spans N913–K923.

Its subcellular location is the cell membrane. In terms of biological role, potential calcium-dependent cell-adhesion protein. May be involved in the establishment and maintenance of specific neuronal connections in the brain. The protein is Protocadherin gamma-B4 (PCDHGB4) of Homo sapiens (Human).